An 80-amino-acid polypeptide reads, in one-letter code: UPF0291 protein LCA_1274 (80 aa).

Positions 59-80 (EGKEVTPEKVKDIQREKGLRDD) are disordered.

It belongs to the UPF0291 family.

It is found in the cytoplasm. This is UPF0291 protein LCA_1274 from Latilactobacillus sakei subsp. sakei (strain 23K) (Lactobacillus sakei subsp. sakei).